The chain runs to 426 residues: Histidine--tRNA ligase (426 aa).

This sequence belongs to the class-II aminoacyl-tRNA synthetase family. Homodimer.

It localises to the cytoplasm. It catalyses the reaction tRNA(His) + L-histidine + ATP = L-histidyl-tRNA(His) + AMP + diphosphate + H(+). The chain is Histidine--tRNA ligase from Colwellia psychrerythraea (strain 34H / ATCC BAA-681) (Vibrio psychroerythus).